We begin with the raw amino-acid sequence, 347 residues long: Tetraacyldisaccharide 4'-kinase (347 aa).

Position 65–72 (65–72 (FVGGTGKT)) interacts with ATP.

Belongs to the LpxK family.

It catalyses the reaction a lipid A disaccharide + ATP = a lipid IVA + ADP + H(+). It participates in glycolipid biosynthesis; lipid IV(A) biosynthesis; lipid IV(A) from (3R)-3-hydroxytetradecanoyl-[acyl-carrier-protein] and UDP-N-acetyl-alpha-D-glucosamine: step 6/6. Its function is as follows. Transfers the gamma-phosphate of ATP to the 4'-position of a tetraacyldisaccharide 1-phosphate intermediate (termed DS-1-P) to form tetraacyldisaccharide 1,4'-bis-phosphate (lipid IVA). The chain is Tetraacyldisaccharide 4'-kinase from Janthinobacterium sp. (strain Marseille) (Minibacterium massiliensis).